Consider the following 103-residue polypeptide: Acyl carrier protein homolog (103 aa).

The Carrier domain maps to 3-87 (ELTSEIKKEI…ETLEKVVQTT (85 aa)). Serine 45 carries the post-translational modification O-(pantetheine 4'-phosphoryl)serine.

4'-phosphopantetheine is transferred from CoA to a specific serine of the apo-ACP-like protein.

It is found in the cytoplasm. Functionally, acyl carrier protein. The sequence is that of Acyl carrier protein homolog from Clostridium acetobutylicum (strain ATCC 824 / DSM 792 / JCM 1419 / IAM 19013 / LMG 5710 / NBRC 13948 / NRRL B-527 / VKM B-1787 / 2291 / W).